Here is a 125-residue protein sequence, read N- to C-terminus: Large ribosomal subunit protein bL19 (125 aa).

This sequence belongs to the bacterial ribosomal protein bL19 family.

This protein is located at the 30S-50S ribosomal subunit interface and may play a role in the structure and function of the aminoacyl-tRNA binding site. The protein is Large ribosomal subunit protein bL19 of Wolbachia sp. subsp. Brugia malayi (strain TRS).